A 284-amino-acid chain; its full sequence is tRNA pseudouridine synthase B (284 aa).

Aspartate 40 functions as the Nucleophile in the catalytic mechanism.

It belongs to the pseudouridine synthase TruB family. Type 1 subfamily.

The catalysed reaction is uridine(55) in tRNA = pseudouridine(55) in tRNA. Its function is as follows. Responsible for synthesis of pseudouridine from uracil-55 in the psi GC loop of transfer RNAs. The polypeptide is tRNA pseudouridine synthase B (Helicobacter hepaticus (strain ATCC 51449 / 3B1)).